Reading from the N-terminus, the 591-residue chain is Probable translation initiation factor IF-2 (591 aa).

The tr-type G domain maps to 6–220; the sequence is IRTPIVCVMG…IMIGLAQRYM (215 aa). Positions 15 to 22 are G1; the sequence is GHVDHGKT. A GTP-binding site is contributed by 15–22; it reads GHVDHGKT. A G2 region spans residues 40-44; that stretch reads AITQH. Residues 76-79 are G3; the sequence is DTPG. GTP-binding positions include 76 to 80 and 130 to 133; these read DTPGH and TKVD. Positions 130 to 133 are G4; that stretch reads TKVD. The segment at 198-200 is G5; it reads SAH.

The protein belongs to the TRAFAC class translation factor GTPase superfamily. Classic translation factor GTPase family. IF-2 subfamily.

Functionally, function in general translation initiation by promoting the binding of the formylmethionine-tRNA to ribosomes. Seems to function along with eIF-2. The chain is Probable translation initiation factor IF-2 from Methanoregula boonei (strain DSM 21154 / JCM 14090 / 6A8).